The following is a 447-amino-acid chain: tRNA-2-methylthio-N(6)-dimethylallyladenosine synthase (447 aa).

Positions 10-128 (KLFCISTYGC…FPEYLHRVLQ (119 aa)) constitute an MTTase N-terminal domain. The [4Fe-4S] cluster site is built by Cys19, Cys55, Cys89, Cys165, Cys169, and Cys172. Residues 151-382 (RKSDVKAFVT…EAINKKVVIK (232 aa)) form the Radical SAM core domain. The TRAM domain occupies 384-447 (KEYEGKVVEV…PFSLIGEIVE (64 aa)).

It belongs to the methylthiotransferase family. MiaB subfamily. As to quaternary structure, monomer. Requires [4Fe-4S] cluster as cofactor.

It is found in the cytoplasm. The catalysed reaction is N(6)-dimethylallyladenosine(37) in tRNA + (sulfur carrier)-SH + AH2 + 2 S-adenosyl-L-methionine = 2-methylsulfanyl-N(6)-dimethylallyladenosine(37) in tRNA + (sulfur carrier)-H + 5'-deoxyadenosine + L-methionine + A + S-adenosyl-L-homocysteine + 2 H(+). Catalyzes the methylthiolation of N6-(dimethylallyl)adenosine (i(6)A), leading to the formation of 2-methylthio-N6-(dimethylallyl)adenosine (ms(2)i(6)A) at position 37 in tRNAs that read codons beginning with uridine. The sequence is that of tRNA-2-methylthio-N(6)-dimethylallyladenosine synthase from Clostridium perfringens (strain ATCC 13124 / DSM 756 / JCM 1290 / NCIMB 6125 / NCTC 8237 / Type A).